The chain runs to 501 residues: Probable cytosol aminopeptidase (501 aa).

Residues Lys-257 and Asp-262 each coordinate Mn(2+). Lys-269 is a catalytic residue. Mn(2+)-binding residues include Asp-281, Asp-341, and Glu-343. The active site involves Arg-345.

The protein belongs to the peptidase M17 family. It depends on Mn(2+) as a cofactor.

It is found in the cytoplasm. The enzyme catalyses Release of an N-terminal amino acid, Xaa-|-Yaa-, in which Xaa is preferably Leu, but may be other amino acids including Pro although not Arg or Lys, and Yaa may be Pro. Amino acid amides and methyl esters are also readily hydrolyzed, but rates on arylamides are exceedingly low.. It carries out the reaction Release of an N-terminal amino acid, preferentially leucine, but not glutamic or aspartic acids.. Its function is as follows. Presumably involved in the processing and regular turnover of intracellular proteins. Catalyzes the removal of unsubstituted N-terminal amino acids from various peptides. This Synechococcus sp. (strain RCC307) protein is Probable cytosol aminopeptidase.